Here is a 247-residue protein sequence, read N- to C-terminus: Carboxy-S-adenosyl-L-methionine synthase (247 aa).

S-adenosyl-L-methionine is bound by residues tyrosine 39, 64 to 66 (GCS), 89 to 90 (DN), 117 to 118 (DI), asparagine 132, and arginine 199.

Belongs to the class I-like SAM-binding methyltransferase superfamily. Cx-SAM synthase family. In terms of assembly, homodimer.

The catalysed reaction is prephenate + S-adenosyl-L-methionine = carboxy-S-adenosyl-L-methionine + 3-phenylpyruvate + H2O. In terms of biological role, catalyzes the conversion of S-adenosyl-L-methionine (SAM) to carboxy-S-adenosyl-L-methionine (Cx-SAM). The polypeptide is Carboxy-S-adenosyl-L-methionine synthase (Salmonella enteritidis PT4 (strain P125109)).